Reading from the N-terminus, the 93-residue chain is Small ribosomal subunit protein uS19 (93 aa).

Belongs to the universal ribosomal protein uS19 family.

Functionally, protein S19 forms a complex with S13 that binds strongly to the 16S ribosomal RNA. The polypeptide is Small ribosomal subunit protein uS19 (Clostridium acetobutylicum (strain ATCC 824 / DSM 792 / JCM 1419 / IAM 19013 / LMG 5710 / NBRC 13948 / NRRL B-527 / VKM B-1787 / 2291 / W)).